Here is a 78-residue protein sequence, read N- to C-terminus: Acyl carrier protein (78 aa).

The 75-residue stretch at 4 to 78 (AEIKDKVYDI…QQAIDYIVKK (75 aa)) folds into the Carrier domain. Ser-39 is subject to O-(pantetheine 4'-phosphoryl)serine.

Belongs to the acyl carrier protein (ACP) family. Post-translationally, 4'-phosphopantetheine is transferred from CoA to a specific serine of apo-ACP by AcpS. This modification is essential for activity because fatty acids are bound in thioester linkage to the sulfhydryl of the prosthetic group.

The protein localises to the cytoplasm. The protein operates within lipid metabolism; fatty acid biosynthesis. Functionally, carrier of the growing fatty acid chain in fatty acid biosynthesis. The chain is Acyl carrier protein from Chlorobium phaeovibrioides (strain DSM 265 / 1930) (Prosthecochloris vibrioformis (strain DSM 265)).